The chain runs to 526 residues: Peptide chain release factor 3 (526 aa).

Positions 8–277 (NKRRTFAIIS…GLTQWAPAPQ (270 aa)) constitute a tr-type G domain. Residues 17–24 (SHPDAGKT), 85–89 (DTPGH), and 139–142 (NKLD) each bind GTP.

Belongs to the TRAFAC class translation factor GTPase superfamily. Classic translation factor GTPase family. PrfC subfamily.

The protein localises to the cytoplasm. Functionally, increases the formation of ribosomal termination complexes and stimulates activities of RF-1 and RF-2. It binds guanine nucleotides and has strong preference for UGA stop codons. It may interact directly with the ribosome. The stimulation of RF-1 and RF-2 is significantly reduced by GTP and GDP, but not by GMP. This chain is Peptide chain release factor 3, found in Histophilus somni (strain 129Pt) (Haemophilus somnus).